We begin with the raw amino-acid sequence, 394 residues long: ORC1-type DNA replication protein 3 (394 aa).

Residues 66–70 (TGKTF) and Y207 contribute to the ATP site.

It belongs to the CDC6/cdc18 family. As to quaternary structure, monomer. Interacts with Cdc6-1, Cdc6-2, MCM and PolB1.

Functionally, involved in regulation of DNA replication. May play essential roles in origin recognition and cell cycle control of replication. Binds to DNA, with a preference for molecules that contain a bubble, a fork, or a tail. Inhibits the binding of the MCM helicase to the origin DNA and inhibits its DNA helicase activity. Also regulates the DNA polymerase and the nuclease activities of PolB1. Inhibits the DNA-binding activity of Cdc6-1 and Cdc6-2. The sequence is that of ORC1-type DNA replication protein 3 (cdc6-3) from Saccharolobus solfataricus (strain ATCC 35092 / DSM 1617 / JCM 11322 / P2) (Sulfolobus solfataricus).